The sequence spans 84 residues: Defensin-like protein 116 (84 aa).

The signal sequence occupies residues 1–24 (MAITKNMLVVLLLTIIFVTSSVHC). Disulfide bonds link C40–C80, C46–C71, C55–C78, and C59–C79.

The protein belongs to the DEFL family.

It is found in the secreted. The chain is Defensin-like protein 116 from Arabidopsis thaliana (Mouse-ear cress).